The primary structure comprises 378 residues: S-adenosylmethionine:tRNA ribosyltransferase-isomerase (378 aa).

It belongs to the QueA family. Monomer.

It localises to the cytoplasm. It carries out the reaction 7-aminomethyl-7-carbaguanosine(34) in tRNA + S-adenosyl-L-methionine = epoxyqueuosine(34) in tRNA + adenine + L-methionine + 2 H(+). Its pathway is tRNA modification; tRNA-queuosine biosynthesis. Its function is as follows. Transfers and isomerizes the ribose moiety from AdoMet to the 7-aminomethyl group of 7-deazaguanine (preQ1-tRNA) to give epoxyqueuosine (oQ-tRNA). The polypeptide is S-adenosylmethionine:tRNA ribosyltransferase-isomerase (Prochlorococcus marinus (strain MIT 9312)).